Reading from the N-terminus, the 66-residue chain is Large ribosomal subunit protein bL35 (66 aa).

The protein belongs to the bacterial ribosomal protein bL35 family.

This Ruegeria pomeroyi (strain ATCC 700808 / DSM 15171 / DSS-3) (Silicibacter pomeroyi) protein is Large ribosomal subunit protein bL35.